We begin with the raw amino-acid sequence, 433 residues long: Peptidoglycan DD-endopeptidase ShyC (433 aa).

The chain crosses the membrane as a helical span at residues Trp10 to Leu30. Zn(2+) is bound by residues His299, Asp303, and His380.

This sequence belongs to the peptidase M23B family. The cofactor is Zn(2+).

The protein localises to the cell inner membrane. The protein operates within cell wall degradation; peptidoglycan degradation. Its activity is regulated as follows. Reduced activity in 0.5 mM EDTA and a complete loss of activity at higher EDTA concentrations. Its function is as follows. Cell wall peptidoglycan (PG) DD-endopeptidase. Hydrolyzes peptide cross-links which covalently connect adjacent PG strands probably to allow insertion of new glycans and thus cell wall expansion. Degrades purified whole PG sacculi in vitro. The protein is Peptidoglycan DD-endopeptidase ShyC of Vibrio cholerae serotype O1 (strain ATCC 39315 / El Tor Inaba N16961).